The following is a 78-amino-acid chain: Large ribosomal subunit protein bL28 (78 aa).

This sequence belongs to the bacterial ribosomal protein bL28 family.

The chain is Large ribosomal subunit protein bL28 from Bordetella avium (strain 197N).